The sequence spans 382 residues: Alpha-methylacyl-CoA racemase (382 aa).

Substrate-binding positions include R36 and 55 to 58 (LDLK). K58 is modified (N6-acetyllysine). The residue at position 87 (K87) is an N6-acetyllysine; alternate. K87 carries the post-translational modification N6-succinyllysine; alternate. Substrate is bound at residue 121 to 126 (GHDINY). H122 serves as the catalytic Proton acceptor. The active-site Proton donor is D152. K268 carries the post-translational modification N6-succinyllysine. The Microbody targeting signal signature appears at 380-382 (ASL).

This sequence belongs to the CoA-transferase III family. Monomer.

It is found in the peroxisome. The protein resides in the mitochondrion. It carries out the reaction a (2S)-2-methylacyl-CoA = a (2R)-2-methylacyl-CoA. The enzyme catalyses (25R)-3alpha,7alpha,12alpha-trihydroxy-5beta-cholestan-26-oyl-CoA = (25S)-3alpha,7alpha,12alpha-trihydroxy-5beta-cholestan-26-oyl-CoA. It catalyses the reaction (2R,6)-dimethylheptanoyl-CoA = (2S,6)-dimethylheptanoyl-CoA. It functions in the pathway lipid metabolism; bile acid biosynthesis. Its pathway is lipid metabolism; fatty acid metabolism. Catalyzes the interconversion of (R)- and (S)-stereoisomers of alpha-methyl-branched-chain fatty acyl-CoA esters. Acts only on coenzyme A thioesters, not on free fatty acids, and accepts as substrates a wide range of alpha-methylacyl-CoAs, including pristanoyl-CoA, trihydroxycoprostanoyl-CoA (an intermediate in bile acid synthesis), and arylpropionic acids like the anti-inflammatory drug ibuprofen (2-(4-isobutylphenyl)propionic acid) but neither 3-methyl-branched nor linear-chain acyl-CoAs. The protein is Alpha-methylacyl-CoA racemase (AMACR) of Homo sapiens (Human).